A 452-amino-acid chain; its full sequence is CASP-like protein 4A1 (452 aa).

Residues 1–17 (MGLRDSLKEREDRRSSE) are compositionally biased toward basic and acidic residues. Disordered regions lie at residues 1–39 (MGLR…RKES), 71–147 (RAGP…ARSS), and 164–283 (AKYV…VQFR). The Cytoplasmic segment spans residues 1–305 (MGLRDSLKER…KRRAAAMQRT (305 aa)). Over residues 25 to 34 (SWMTRESTTG) the composition is skewed to polar residues. Composition is skewed to low complexity over residues 105 to 126 (QAQA…TGSG) and 190 to 205 (GWYS…AAPP). Pro residues predominate over residues 211–272 (DPPPAPPRRQ…TAPAPAPVPA (62 aa)). A helical transmembrane segment spans residues 306-326 (ALLARGAAAGLCLAALAVLAA). Over 327 to 347 (DTRKGWARDSYSNYTQFRYSE) the chain is Extracellular. N-linked (GlcNAc...) asparagine glycosylation occurs at Asn-339. Residues 348-368 (AVNVIGFIYSVFQFVALVELM) traverse the membrane as a helical segment. Residues 369 to 389 (RRNKHLIPHPKRDLFDFTMDQ) are Cytoplasmic-facing. Residues 390–406 (VLTYLLISSSSSATARV) traverse the membrane as a helical segment. At 407–423 (SDLIDNWGSDPFPSMAN) the chain is on the extracellular side. Asn-423 carries N-linked (GlcNAc...) asparagine glycosylation. Residues 424-444 (GSIAISFLAFAVFAICSLISA) traverse the membrane as a helical segment. Residues 445-452 (YNLFRRDV) lie on the Cytoplasmic side of the membrane.

This sequence belongs to the Casparian strip membrane proteins (CASP) family. Homodimer and heterodimers.

The protein resides in the cell membrane. In Sorghum bicolor (Sorghum), this protein is CASP-like protein 4A1.